A 396-amino-acid chain; its full sequence is Elongation factor Tu 2 (396 aa).

Residues 10–206 (KPHVNVGTIG…TLDTYIPEPE (197 aa)) enclose the tr-type G domain. A G1 region spans residues 19 to 26 (GHVDHGKT). 19–26 (GHVDHGKT) is a binding site for GTP. Thr26 lines the Mg(2+) pocket. Residues 60-64 (GITIN) are G2. The segment at 81 to 84 (DCPG) is G3. Residues 81 to 85 (DCPGH) and 136 to 139 (NKCD) contribute to the GTP site. A G4 region spans residues 136–139 (NKCD). Positions 174–176 (SAL) are G5.

It belongs to the TRAFAC class translation factor GTPase superfamily. Classic translation factor GTPase family. EF-Tu/EF-1A subfamily. In terms of assembly, monomer.

The protein localises to the cytoplasm. It carries out the reaction GTP + H2O = GDP + phosphate + H(+). Its function is as follows. GTP hydrolase that promotes the GTP-dependent binding of aminoacyl-tRNA to the A-site of ribosomes during protein biosynthesis. The sequence is that of Elongation factor Tu 2 from Psychrobacter sp. (strain PRwf-1).